Reading from the N-terminus, the 417-residue chain is MLLPVPLLLGLLGLAAADPTVYFKEQFLDGDGWTERWIESKHKPDFGKFVLSSGKFYGDQEKDKGLQTSQDARFYALSARFEPFSNKGQTLVVQFTVKHEQNIDCGGGYVKLFPAGLDQTDMHGDSEYNIMFGPDICGPGTKKVHVIFNYKGKNVLINKDIRCKDDEFTHLYTLIVRPNNTYEVKIDNSQVESGSLEDDWDFLPPKKIKDPDAAKPEDWDDRAKIDDPTDSKPEDWDKPEHIPDPDAKKPEDWDEEMDGEWEPPVIQNPEYKGEWKPRQIDNPEYKGIWIHPEIDNPEYSPDSNIYAYENFAVLGLDLWQVKSGTIFDNFLITNDEAYAEEFGNETWGVTKAAEKQMKDKQDEEQRLHEEEEEKKGKEEEEADKDDDEDKDEDEEDEDEKEEEEEEDAAAGQAKDEL.

Residues Met1–Ala17 form the signal peptide. The segment at Asp18–Glu197 is N-domain. A Ca(2+)-binding site is contributed by Gln26. Lys48 is subject to N6-acetyllysine. Ca(2+) is bound by residues Lys62 and Lys64. Lys64 carries the post-translational modification N6-(2-hydroxyisobutyryl)lysine. An alpha-D-glucoside contacts are provided by Tyr109, Lys111, Tyr128, and Asp135. A disulfide bridge links Cys137 with Cys163. Position 159 is an N6-acetyllysine (Lys159). Asn179 is a glycosylation site (N-linked (GlcNAc...) asparagine). A 1-1 repeat occupies Val191–Phe202. Residues Val191 to Glu255 are 4 X approximate repeats. The segment at Ser193–Glu270 is disordered. The P-domain stretch occupies residues Asp198 to Tyr308. Basic and acidic residues predominate over residues Lys207–Glu251. Position 209 is an N6-acetyllysine (Lys209). Repeat copies occupy residues Asp210–Asp221, Asp227–Lys238, Asp244–Glu255, Gly259–Pro269, Gly273–Pro283, and Gly287–Pro297. An interaction with PPIB region spans residues Asp237–Glu270. Acidic residues predominate over residues Asp252–Trp261. The interval Gly259–Pro297 is 3 X approximate repeats. The interval Glu309–Leu417 is C-domain. Residue Asp317 coordinates an alpha-D-glucoside. Asp328 contributes to the Ca(2+) binding site. Positions Thr350 to Leu417 are disordered. Basic and acidic residues predominate over residues Ala352–Glu378. Residues Glu379–Ala408 are compositionally biased toward acidic residues. Residues Lys414 to Leu417 carry the Prevents secretion from ER motif.

The protein belongs to the calreticulin family. As to quaternary structure, monomer. Component of an EIF2 complex at least composed of CELF1/CUGBP1, CALR, CALR3, EIF2S1, EIF2S2, HSP90B1 and HSPA5. Interacts with PDIA3/ERp57 and SPACA9. Interacts with TRIM21. Interacts with NR3C1. Interacts with PPIB. Interacts (via P-domain) with PDIA5. Interacts with GABARAP. Interacts with CLCC1.

Its subcellular location is the endoplasmic reticulum lumen. It localises to the cytoplasm. The protein resides in the cytosol. The protein localises to the secreted. It is found in the extracellular space. Its subcellular location is the extracellular matrix. It localises to the cell surface. The protein resides in the sarcoplasmic reticulum lumen. The protein localises to the cytoplasmic vesicle. It is found in the secretory vesicle. Its subcellular location is the cortical granule. It localises to the cytolytic granule. Its function is as follows. Calcium-binding chaperone that promotes folding, oligomeric assembly and quality control in the endoplasmic reticulum (ER) via the calreticulin/calnexin cycle. This lectin interacts transiently with almost all of the monoglucosylated glycoproteins that are synthesized in the ER. Interacts with the DNA-binding domain of NR3C1 and mediates its nuclear export. Involved in maternal gene expression regulation. May participate in oocyte maturation via the regulation of calcium homeostasis. Present in the cortical granules of non-activated oocytes, is exocytosed during the cortical reaction in response to oocyte activation and might participate in the block to polyspermy. The protein is Calreticulin (CALR) of Bos taurus (Bovine).